The sequence spans 122 residues: Phospholipase A2 crotoxin basic subunit CBb (122 aa).

Disulfide bonds link Cys26–Cys115, Cys28–Cys44, Cys43–Cys95, Cys49–Cys122, Cys50–Cys88, Cys57–Cys81, and Cys75–Cys86. Ca(2+) is bound by residues Tyr27, Gly29, and Gly31. The active site involves His47. A Ca(2+)-binding site is contributed by Asp48. Asp89 is an active-site residue.

Belongs to the phospholipase A2 family. Group II subfamily. D49 sub-subfamily. In terms of assembly, heterodimer of one of the acidic (CA1, CA2, CA3 or CA4) and one of the basic (CBa1, CBa2, CBb, CBc or CBd) subunits; non-covalently linked. The acidic subunit is non-toxic, without enzymatic activity and comprises 3 peptides that are cross-linked by 5 disulfide bridges. The basic subunit is toxic, has phospholipase A2 activity and is composed of a single chain. Multiple variants of each subunit give different crotoxin complexes that can be subdivided into 2 classes: (1) those of high toxicity, low PLA2 activity (CBb, CBc and CBd linked with high affinity to any CA) and high stability (K(d)=4.5 nM) and (2) those of moderate toxicity, high PLA2 activity (CBa2 linked with low affinity to any CA) and low stability (K(d)=25 nM). Requires Ca(2+) as cofactor. In terms of tissue distribution, expressed by the venom gland.

The protein resides in the secreted. The catalysed reaction is a 1,2-diacyl-sn-glycero-3-phosphocholine + H2O = a 1-acyl-sn-glycero-3-phosphocholine + a fatty acid + H(+). Heterodimer CA-CB: Crotoxin is a potent presynaptic neurotoxin that possesses phospholipase A2 (PLA2) activity and exerts a lethal action by blocking neuromuscular transmission. It consists of a non-covalent association of a basic and weakly toxic PLA2 subunit (CBa2, CBb, CBc, or CBd), with a small acidic, non-enzymatic and non-toxic subunit (CA1, CA2, CA3 or CA4). The complex acts by binding to a specific 48-kDa protein (R48) receptor located on presynaptic membranes, forming a transient ternary complex CA-CB-R48, followed by dissociation of the CA-CB complex and release of the CA subunit. At equilibrium, only the CB subunits remain associated with the specific crotoxin receptor. In addition to neurotoxicity, crotoxin has been found to exert myotoxicity, nephrotoxicity, and cardiovascular toxicity. Moreover, anti-inflammatory, immunomodulatory, anti-tumor and analgesic effects of crotoxin have also been reported. In terms of biological role, monomer CBb: The basic subunit of crotoxin is a snake venom phospholipase A2 (PLA2) that exhibits weak neurotoxicity (10-fold less than the heterodimer) and strong anticoagulant effects by binding to factor Xa (F10) and inhibiting the prothrombinase activity. In addition, it shows the same effects described for the heterodimer and binds the nucleotide-binding domain (NBD1) of CFTR chloride channels and increases the channel current. PLA2 catalyzes the calcium-dependent hydrolysis of the 2-acyl groups in 3-sn-phosphoglycerides. The polypeptide is Phospholipase A2 crotoxin basic subunit CBb (Crotalus durissus terrificus (South American rattlesnake)).